Here is a 660-residue protein sequence, read N- to C-terminus: Bifunctional polymyxin resistance protein ArnA (660 aa).

The tract at residues 1 to 304 (MKAVIFAYHD…TLGLVAGARL (304 aa)) is formyltransferase ArnAFT. The Proton donor; for formyltransferase activity role is filled by His-104. Residues Arg-114 and 136–140 (VKRAD) each bind (6R)-10-formyltetrahydrofolate. The dehydrogenase ArnADH stretch occupies residues 314 to 660 (RRIRVLILGV…RSVDVAERAS (347 aa)). NAD(+) is bound by residues Asp-347 and 368 to 369 (DI). UDP-alpha-D-glucuronate contacts are provided by residues Ala-393, Tyr-398, and 432–433 (TS). Glu-434 functions as the Proton acceptor; for decarboxylase activity in the catalytic mechanism. UDP-alpha-D-glucuronate-binding positions include Arg-460, Asn-492, 526–535 (KLIDGGQQKR), and Tyr-613. The active-site Proton donor; for decarboxylase activity is Arg-619.

This sequence in the N-terminal section; belongs to the Fmt family. UDP-L-Ara4N formyltransferase subfamily. The protein in the C-terminal section; belongs to the NAD(P)-dependent epimerase/dehydratase family. UDP-glucuronic acid decarboxylase subfamily. Homohexamer, formed by a dimer of trimers.

The catalysed reaction is UDP-alpha-D-glucuronate + NAD(+) = UDP-beta-L-threo-pentopyranos-4-ulose + CO2 + NADH. It carries out the reaction UDP-4-amino-4-deoxy-beta-L-arabinose + (6R)-10-formyltetrahydrofolate = UDP-4-deoxy-4-formamido-beta-L-arabinose + (6S)-5,6,7,8-tetrahydrofolate + H(+). The protein operates within nucleotide-sugar biosynthesis; UDP-4-deoxy-4-formamido-beta-L-arabinose biosynthesis; UDP-4-deoxy-4-formamido-beta-L-arabinose from UDP-alpha-D-glucuronate: step 1/3. Its pathway is nucleotide-sugar biosynthesis; UDP-4-deoxy-4-formamido-beta-L-arabinose biosynthesis; UDP-4-deoxy-4-formamido-beta-L-arabinose from UDP-alpha-D-glucuronate: step 3/3. It functions in the pathway bacterial outer membrane biogenesis; lipopolysaccharide biosynthesis. In terms of biological role, bifunctional enzyme that catalyzes the oxidative decarboxylation of UDP-glucuronic acid (UDP-GlcUA) to UDP-4-keto-arabinose (UDP-Ara4O) and the addition of a formyl group to UDP-4-amino-4-deoxy-L-arabinose (UDP-L-Ara4N) to form UDP-L-4-formamido-arabinose (UDP-L-Ara4FN). The modified arabinose is attached to lipid A and is required for resistance to polymyxin and cationic antimicrobial peptides. In Salmonella newport (strain SL254), this protein is Bifunctional polymyxin resistance protein ArnA.